A 278-amino-acid chain; its full sequence is HTH-type transcriptional activator RhaS (278 aa).

Positions 174 to 272 constitute an HTH araC/xylS-type domain; that stretch reads NQLMAWLEDH…NWSPRDIRQG (99 aa). 2 DNA-binding regions (H-T-H motif) span residues 191-212 and 239-262; these read EAVA…KQHT and VTEI…RREF.

Binds DNA as a dimer.

The protein localises to the cytoplasm. Functionally, activates expression of the rhaBAD and rhaT operons. This chain is HTH-type transcriptional activator RhaS, found in Salmonella enteritidis PT4 (strain P125109).